Reading from the N-terminus, the 164-residue chain is Protein-export protein SecB (164 aa).

This sequence belongs to the SecB family. Homotetramer, a dimer of dimers. One homotetramer interacts with 1 SecA dimer.

Its subcellular location is the cytoplasm. In terms of biological role, one of the proteins required for the normal export of preproteins out of the cell cytoplasm. It is a molecular chaperone that binds to a subset of precursor proteins, maintaining them in a translocation-competent state. It also specifically binds to its receptor SecA. The chain is Protein-export protein SecB from Ruegeria sp. (strain TM1040) (Silicibacter sp.).